Reading from the N-terminus, the 189-residue chain is Small heat shock protein 21 (189 aa).

Residues Pro26–Gly53 form a disordered region. Positions Lys77–Ser183 constitute a sHSP domain.

Belongs to the small heat shock protein (HSP20) family.

Functionally, heat shock protein required for pathogenicity. Mediates thermotolerance and adaptation to oxidative stress and ethanol-induced stress. Required for invasive growth and filament formation under various filament inducing conditions. Plays a role in the capacity of damaging human-derived endothelial and oral epithelial cells during infection. Potentiates resistance to antifungal drugs, as well as resistance to killing by human neutrophils. Plays a major role in trehalose homeostasis in response to elevated temperatures. Regulates CEK1 activation by phosphorylation in response to elevated temperatures. The chain is Small heat shock protein 21 (HSP21) from Candida albicans (strain SC5314 / ATCC MYA-2876) (Yeast).